The sequence spans 532 residues: Egg peptide speract receptor (532 aa).

The signal sequence occupies residues 1-30; that stretch reads MGLPMMLQQYCWAACLVICIAISSVDDVGA. Residues 31–491 lie on the Extracellular side of the membrane; that stretch reads EQNYGREAVE…VVCEGSTAPP (461 aa). 4 consecutive SRCR domains span residues 43–144, 153–257, 264–366, and 382–485; these read IRLI…VECL, LRMI…VVCK, IRLM…VVCA, and VRIV…VVCE. Disulfide bonds link Cys68-Cys133, Cys81-Cys143, Cys112-Cys122, Cys178-Cys244, Cys191-Cys256, Cys223-Cys233, Cys289-Cys355, Cys302-Cys365, Cys335-Cys345, Cys406-Cys475, Cys419-Cys484, and Cys454-Cys465. 2 N-linked (GlcNAc...) asparagine glycosylation sites follow: Asn78 and Asn115. Asn459 carries N-linked (GlcNAc...) asparagine glycosylation. Residues 492–520 form a helical membrane-spanning segment; the sequence is SGMSIAVIGGAAGGGVAGLAVAAFAFYYI. The Cytoplasmic portion of the chain corresponds to 521–532; the sequence is KFVKPAGGGGQA.

It localises to the membrane. In terms of biological role, receptor for the egg peptide speract. In Strongylocentrotus purpuratus (Purple sea urchin), this protein is Egg peptide speract receptor.